Reading from the N-terminus, the 858-residue chain is ATP-dependent DNA helicase Q-like SIM (858 aa).

The region spanning 2–44 is the UBA domain; sequence DLSSDQLVMKIVEMGFEKLDALEAVKAVGGKSCDDAVEYILKG. The Helicase ATP-binding domain maps to 177-353; sequence LSTWVAHKDC…LESLHLSKET (177 aa). ATP is bound at residue 190-197; sequence AATGSGKS. The DEAH box signature appears at 288-291; sequence DEAH. Positions 402–450 are disordered; that stretch reads LAVISRESEEQTDFGSHDSENIHETDYDEDEEDQENSLAKKNSSNGKEL. The span at 416–426 shows a compositional bias: basic and acidic residues; the sequence is GSHDSENIHET. A compositionally biased stretch (acidic residues) spans 427–436; that stretch reads DYDEDEEDQE. The span at 437–448 shows a compositional bias: polar residues; the sequence is NSLAKKNSSNGK. In terms of domain architecture, Helicase C-terminal spans 491 to 627; it reads EKQKDLEGLT…QTEQAYKMLS (137 aa). Residues 822-858 form a disordered region; it reads RQRLERRERKPRRERKPRKKRTRGRSSTKLHPWRSKE. Residues 830-858 are compositionally biased toward basic residues; the sequence is RKPRRERKPRKKRTRGRSSTKLHPWRSKE.

Belongs to the helicase family. RecQ subfamily. It depends on Mg(2+) as a cofactor. Mn(2+) serves as cofactor. In terms of tissue distribution, mostly expressed in roots and seedlings, and, to a lower extent, in leaves, shoots, shoot apical mersitem, inflorescences, flowers, siliques and seeds.

The protein resides in the nucleus. It carries out the reaction Couples ATP hydrolysis with the unwinding of duplex DNA by translocating in the 3'-5' direction.. The enzyme catalyses ATP + H2O = ADP + phosphate + H(+). Its function is as follows. Plant specific, probable 3'-5' DNA helicase that may play a role in the repair of DNA. The chain is ATP-dependent DNA helicase Q-like SIM (RECQSIM) from Arabidopsis thaliana (Mouse-ear cress).